A 510-amino-acid polypeptide reads, in one-letter code: Light-independent protochlorophyllide reductase subunit B (510 aa).

Residue Asp36 coordinates [4Fe-4S] cluster. Catalysis depends on Asp297, which acts as the Proton donor. Residue 432–433 participates in substrate binding; that stretch reads GM.

Belongs to the ChlB/BchB/BchZ family. Protochlorophyllide reductase is composed of three subunits; ChlL, ChlN and ChlB. Forms a heterotetramer of two ChlB and two ChlN subunits. [4Fe-4S] cluster is required as a cofactor.

The protein resides in the plastid. The protein localises to the chloroplast. It catalyses the reaction chlorophyllide a + oxidized 2[4Fe-4S]-[ferredoxin] + 2 ADP + 2 phosphate = protochlorophyllide a + reduced 2[4Fe-4S]-[ferredoxin] + 2 ATP + 2 H2O. It functions in the pathway porphyrin-containing compound metabolism; chlorophyll biosynthesis (light-independent). Its function is as follows. Component of the dark-operative protochlorophyllide reductase (DPOR) that uses Mg-ATP and reduced ferredoxin to reduce ring D of protochlorophyllide (Pchlide) to form chlorophyllide a (Chlide). This reaction is light-independent. The NB-protein (ChlN-ChlB) is the catalytic component of the complex. This chain is Light-independent protochlorophyllide reductase subunit B, found in Pinus koraiensis (Korean pine).